We begin with the raw amino-acid sequence, 161 residues long: MPAPAEVQAATLQRFLAAWQKWDAQEWLDGFADDFTQITLPLSLGIPSRSRAEVEQVLPALVATVKSYQLTIRTVVHDPERNKAAVYALSTGTLPWGPWELEYSVFITFSEAGDQVAVLEEMMDSAFLQEFGPKFGQYLQANGGPRAVAAGVGAGGATAVH.

The protein belongs to the avfA family.

It participates in secondary metabolite biosynthesis. Functionally, monooxygenase; part of the gene cluster that mediates the biosynthesis of agnestins, dihydroxy-xanthone metabolites. The pathway begins with the assembly and cyclization of atrochrysone thioester by the non-reducing polyketide synthase Agnpks1. The atrochrysone carboxyl ACP thioesterase AgnL7 then breaks the thioester bond and releases the atrochrysone carboxylic acid as the first enzyme-free intermediate. The decarboxylase AgnL1 then catalyzes the concerted decarboxylation-elimination required to convert atochrysone carboxylic acid into emodin anthrone, which is further oxidized to emodin by the anthrone oxygenase AgnL2. Emodin then undergoes reduction catalyzed by the oxidoreductase AgnL4 to yield the dihydroquinone tautomer which is the substrate for reduction by the short chain dehydrogenase AgnL6 reduction to produce hydroxyketone, followed by AgnL8 dehydration and likely spontaneous autoxidation to chrysophanol. Baeyer-Villiger oxidation by the oxidase AgnL3 leads to monodictyphenone via cleavage of the C-10/C-10a bond of chrysophanol. Alternative cleavage at the C-4a/C-10 bond of chrysophanol also leads to the formation some cephalone F. Further conversion to agnestins A and B, requires reduction to dihydro-monodictyphenone, oxidation to agnestin C probably via an epoxide, and rearrangement to either agnestin A or agnestin B directly, although agnestin A or agnestin B can also interconvert. Within the cluster, AgnR1 is the only unassigned oxidoreductase present which could be involved in this conversion. However, AgnR1 seems not to be involved in this step, and thus genes involved in the proposed oxidation/reduction may be located elsewhere on the genome. Further agnestin A derivatives are probably formed by spontaneous decarboxylations, dehydrations and methanolysis reactions. The protein is Monooxygenase AgnL5 of Paecilomyces divaricatus (Penicillium divaricatum).